The primary structure comprises 287 residues: MKSRLFIISQYLLPHHLLSRLAGCVAECRARWFKNAFTAWFAKRYQVNMSEALVEDLSAYEHFNAFFTRALKPGARPLDETPGAILCPADGAVSQLGPIEHGRIFQAKGHGFSAQELLGGDPAMAAPFMGGEFATIYLSPKDYHRVHMPLAGTLREMVYVPGRLFSVNQTTAENVPELFARNERVVCLFDTERGPMAVVLVGAMIVASIETVWAGLVTPPKRELKTFRYDEASRAPIHLEKGAELGRFKLGSTAIVLFGPEQVRWAESLGAGSAVRMGQLLAEPVQA.

Catalysis depends on charge relay system; for autoendoproteolytic cleavage activity residues aspartate 90, histidine 147, and serine 252. The active-site Schiff-base intermediate with substrate; via pyruvic acid; for decarboxylase activity is serine 252. Serine 252 carries the post-translational modification Pyruvic acid (Ser); by autocatalysis.

It belongs to the phosphatidylserine decarboxylase family. PSD-B subfamily. Prokaryotic type I sub-subfamily. Heterodimer of a large membrane-associated beta subunit and a small pyruvoyl-containing alpha subunit. It depends on pyruvate as a cofactor. In terms of processing, is synthesized initially as an inactive proenzyme. Formation of the active enzyme involves a self-maturation process in which the active site pyruvoyl group is generated from an internal serine residue via an autocatalytic post-translational modification. Two non-identical subunits are generated from the proenzyme in this reaction, and the pyruvate is formed at the N-terminus of the alpha chain, which is derived from the carboxyl end of the proenzyme. The autoendoproteolytic cleavage occurs by a canonical serine protease mechanism, in which the side chain hydroxyl group of the serine supplies its oxygen atom to form the C-terminus of the beta chain, while the remainder of the serine residue undergoes an oxidative deamination to produce ammonia and the pyruvoyl prosthetic group on the alpha chain. During this reaction, the Ser that is part of the protease active site of the proenzyme becomes the pyruvoyl prosthetic group, which constitutes an essential element of the active site of the mature decarboxylase.

It localises to the cell membrane. The enzyme catalyses a 1,2-diacyl-sn-glycero-3-phospho-L-serine + H(+) = a 1,2-diacyl-sn-glycero-3-phosphoethanolamine + CO2. The protein operates within phospholipid metabolism; phosphatidylethanolamine biosynthesis; phosphatidylethanolamine from CDP-diacylglycerol: step 2/2. Catalyzes the formation of phosphatidylethanolamine (PtdEtn) from phosphatidylserine (PtdSer). The polypeptide is Phosphatidylserine decarboxylase proenzyme (Pseudomonas putida (strain GB-1)).